The primary structure comprises 437 residues: tRNA(Ile2) 2-agmatinylcytidine synthetase TiaS (437 aa).

This sequence belongs to the TiaS family.

It localises to the cytoplasm. The enzyme catalyses cytidine(34) in tRNA(Ile2) + agmatine + ATP + H2O = 2-agmatinylcytidine(34) in tRNA(Ile2) + AMP + 2 phosphate + 2 H(+). Its function is as follows. ATP-dependent agmatine transferase that catalyzes the formation of 2-agmatinylcytidine (agm2C) at the wobble position (C34) of tRNA(Ile2), converting the codon specificity from AUG to AUA. The sequence is that of tRNA(Ile2) 2-agmatinylcytidine synthetase TiaS from Acidilobus saccharovorans (strain DSM 16705 / JCM 18335 / VKM B-2471 / 345-15).